The primary structure comprises 517 residues: Bifunctional purine biosynthesis protein PurH (517 aa).

An MGS-like domain is found at 1-151; the sequence is MTQERKIKRA…KNFAHVAVLC (151 aa).

This sequence belongs to the PurH family.

The catalysed reaction is (6R)-10-formyltetrahydrofolate + 5-amino-1-(5-phospho-beta-D-ribosyl)imidazole-4-carboxamide = 5-formamido-1-(5-phospho-D-ribosyl)imidazole-4-carboxamide + (6S)-5,6,7,8-tetrahydrofolate. It catalyses the reaction IMP + H2O = 5-formamido-1-(5-phospho-D-ribosyl)imidazole-4-carboxamide. It functions in the pathway purine metabolism; IMP biosynthesis via de novo pathway; 5-formamido-1-(5-phospho-D-ribosyl)imidazole-4-carboxamide from 5-amino-1-(5-phospho-D-ribosyl)imidazole-4-carboxamide (10-formyl THF route): step 1/1. Its pathway is purine metabolism; IMP biosynthesis via de novo pathway; IMP from 5-formamido-1-(5-phospho-D-ribosyl)imidazole-4-carboxamide: step 1/1. The chain is Bifunctional purine biosynthesis protein PurH from Elusimicrobium minutum (strain Pei191).